A 153-amino-acid polypeptide reads, in one-letter code: MKKNIALFAGSFDPFTRGHADIVERSLAIFDEVIIAIGINEQKRTLFSAERRQEQIARYYASRPAIGVITYSGLTVDLVRQTGATALVRGIRSGSDFEYERTLADLNRHLSGVDTVLLCTDTRLSFISSSAVRELISFGRDVSDFLPEGFVLD.

Serine 11 lines the substrate pocket. Residues 11–12 (SF) and histidine 19 each bind ATP. Substrate contacts are provided by lysine 43, threonine 75, and arginine 89. Residues 90 to 92 (GIR), glutamate 100, and 124 to 130 (LSFISSS) contribute to the ATP site.

The protein belongs to the bacterial CoaD family. As to quaternary structure, homohexamer. Mg(2+) is required as a cofactor.

The protein localises to the cytoplasm. The enzyme catalyses (R)-4'-phosphopantetheine + ATP + H(+) = 3'-dephospho-CoA + diphosphate. It functions in the pathway cofactor biosynthesis; coenzyme A biosynthesis; CoA from (R)-pantothenate: step 4/5. In terms of biological role, reversibly transfers an adenylyl group from ATP to 4'-phosphopantetheine, yielding dephospho-CoA (dPCoA) and pyrophosphate. This is Phosphopantetheine adenylyltransferase from Porphyromonas gingivalis (strain ATCC 33277 / DSM 20709 / CIP 103683 / JCM 12257 / NCTC 11834 / 2561).